A 960-amino-acid polypeptide reads, in one-letter code: Isoleucine--tRNA ligase (960 aa).

The 'HIGH' region signature appears at 60-70 (PYANGSLHIGH). Residue Glu-573 coordinates L-isoleucyl-5'-AMP. A 'KMSKS' region motif is present at residues 614–618 (KMSKS). Residue Lys-617 coordinates ATP. Zn(2+) contacts are provided by Cys-929, Cys-932, Cys-949, and Cys-952.

This sequence belongs to the class-I aminoacyl-tRNA synthetase family. IleS type 1 subfamily. In terms of assembly, monomer. Zn(2+) serves as cofactor.

It localises to the cytoplasm. The catalysed reaction is tRNA(Ile) + L-isoleucine + ATP = L-isoleucyl-tRNA(Ile) + AMP + diphosphate. Functionally, catalyzes the attachment of isoleucine to tRNA(Ile). As IleRS can inadvertently accommodate and process structurally similar amino acids such as valine, to avoid such errors it has two additional distinct tRNA(Ile)-dependent editing activities. One activity is designated as 'pretransfer' editing and involves the hydrolysis of activated Val-AMP. The other activity is designated 'posttransfer' editing and involves deacylation of mischarged Val-tRNA(Ile). This is Isoleucine--tRNA ligase from Nostoc sp. (strain PCC 7120 / SAG 25.82 / UTEX 2576).